Reading from the N-terminus, the 618-residue chain is Poly(A)-specific ribonuclease PARN-like (618 aa).

A divalent metal cation-binding residues include serine 54, glutamine 56, aspartate 332, and asparagine 418. The segment at 588-607 (ALESSDTDPDSDTKPSEIDW) is disordered.

Belongs to the CAF1 family. A divalent metal cation is required as a cofactor.

The protein localises to the nucleus. It localises to the cytoplasm. It catalyses the reaction Exonucleolytic cleavage of poly(A) to 5'-AMP.. Its function is as follows. 3'-exoribonuclease that has a preference for poly(A) tails of mRNAs, thereby efficiently degrading poly(A) tails. Exonucleolytic degradation of the poly(A) tail is often the first step in the decay of eukaryotic mRNAs. In Arabidopsis thaliana (Mouse-ear cress), this protein is Poly(A)-specific ribonuclease PARN-like.